A 609-amino-acid chain; its full sequence is MTIDNPSAFLKTLPTGSGVYQMQDAQGKVIYVGKARNLQKRVSSYFRRQLDSKTQAMMAQVQSIQTTITRNENEALLLEASFIKQFRPRYNVLLRDDKSYPYLYLATHQKFPRLDFYRGAKKAPGRYFGPYPNAGSVRENLALIQKLFKLRQCSESFFKNRTRPCLQYQIKRCTAPCVGYVNEQEYRRQVEDAILFFEGKNDQVIIKLTERMEVASENLVFEEAAHYRDQIRQLRRLQKQQIITGGKGNIDIIGIAESNGAIGFAILFIRSGRMIGHKPFFPNTPLGTTLQTALVEFIPQYYLSPLRNGDIPERIVTSEPLEDRLWIQRALSSGLNRKLAITDQKRAPYKQWQAMAALNAAQALSQHLAQKNTFALKLEAIQKSLALPNPIARIECFDISHTLGEATVASCVVFGEEGPIKKDYRRFNISGVTPGDDYGALRQALTRRYVRLKEGEGILPDVLLIDGGMGQLRQAAEVLEELQVSGVILTAIAKGPGRKAGLEKLFVWGRREEIHLPADNIAFHLIQQIRDEAHRFAITAHCNRRAKRRVESTLQEIEGIGPKRRQKLLKYFGGLQELQRASIEEIARVPGVSETLAKAIYDDCHQHKG.

The region spanning 15–92 (TGSGVYQMQD…IKQFRPRYNV (78 aa)) is the GIY-YIG domain. The region spanning 202-237 (DQVIIKLTERMEVASENLVFEEAAHYRDQIRQLRRL) is the UVR domain.

The protein belongs to the UvrC family. Interacts with UvrB in an incision complex.

Its subcellular location is the cytoplasm. The UvrABC repair system catalyzes the recognition and processing of DNA lesions. UvrC both incises the 5' and 3' sides of the lesion. The N-terminal half is responsible for the 3' incision and the C-terminal half is responsible for the 5' incision. This chain is UvrABC system protein C, found in Coxiella burnetii (strain CbuG_Q212) (Coxiella burnetii (strain Q212)).